A 368-amino-acid polypeptide reads, in one-letter code: tRNA/tmRNA (uracil-C(5))-methyltransferase (368 aa).

The S-adenosyl-L-methionine site is built by Gln186, Tyr214, Asn219, Glu235, and Asp295. The active-site Nucleophile is Cys320. The active-site Proton acceptor is the Glu354.

The protein belongs to the class I-like SAM-binding methyltransferase superfamily. RNA M5U methyltransferase family. TrmA subfamily.

It catalyses the reaction uridine(54) in tRNA + S-adenosyl-L-methionine = 5-methyluridine(54) in tRNA + S-adenosyl-L-homocysteine + H(+). The enzyme catalyses uridine(341) in tmRNA + S-adenosyl-L-methionine = 5-methyluridine(341) in tmRNA + S-adenosyl-L-homocysteine + H(+). Dual-specificity methyltransferase that catalyzes the formation of 5-methyluridine at position 54 (m5U54) in all tRNAs, and that of position 341 (m5U341) in tmRNA (transfer-mRNA). This Aromatoleum aromaticum (strain DSM 19018 / LMG 30748 / EbN1) (Azoarcus sp. (strain EbN1)) protein is tRNA/tmRNA (uracil-C(5))-methyltransferase.